The chain runs to 1273 residues: Cullin-associated NEDD8-dissociated protein 2 (1273 aa).

Ser2 is subject to N-acetylserine. 26 HEAT repeats span residues 2-36 (STGA…LDPL), 37-74 (PWLQ…ELQK), 82-119 (DSER…KVKE), 121-157 (QVEN…ELPP), 167-205 (SVCR…RLGA), 209-246 (TFHA…ACST), 248-284 (LFVE…SVGR), 292-329 (AHLD…KCPK), 364-405 (TEDS…SRPD), 409-446 (DFHC…HTRP), 469-506 (AQVP…VLPG), 554-591 (PHLP…TLWP), 602-641 (PYVG…HLGD), 685-722 (PILA…SQGL), 727-764 (PAVR…TQPA), 768-807 (EVSG…TRPP), 809-850 (VEYS…ALSA), 894-931 (GPQR…GNLP), 933-968 (FLPF…DNLK), 970-1003 (YVED…LVFV), 1004-1040 (NPPF…DQPH), 1044-1081 (PLLK…NKPS), 1085-1121 (DLLD…DDGL), 1142-1178 (LDIC…LCPA), 1194-1231 (TCTA…NPEV), and 1241-1273 (STQI…MELS). Residues 352 to 383 (YNHDSDEEEQMETEDSEFSEQESEDEYSDDDD) form a disordered region. A compositionally biased stretch (acidic residues) spans 356–383 (SDEEEQMETEDSEFSEQESEDEYSDDDD).

The protein belongs to the CAND family. As to quaternary structure, binds TBP, CNOT3 and UBE3C. Post-translationally, ubiquitinated and targeted for proteasomal degradation. Detected in heart and skeletal muscle.

It is found in the nucleus. Probable assembly factor of SCF (SKP1-CUL1-F-box protein) E3 ubiquitin ligase complexes that promotes the exchange of the substrate-recognition F-box subunit in SCF complexes, thereby playing a key role in the cellular repertoire of SCF complexes. In Rattus norvegicus (Rat), this protein is Cullin-associated NEDD8-dissociated protein 2 (Cand2).